Here is a 150-residue protein sequence, read N- to C-terminus: Ribonuclease H (150 aa).

The RNase H type-1 domain occupies 1-142 (MSDSVEIFTD…ADQLANRGVD (142 aa)). Residues D10, E48, D70, and D134 each contribute to the Mg(2+) site.

Belongs to the RNase H family. As to quaternary structure, monomer. Mg(2+) is required as a cofactor.

It localises to the cytoplasm. It catalyses the reaction Endonucleolytic cleavage to 5'-phosphomonoester.. Its function is as follows. Endonuclease that specifically degrades the RNA of RNA-DNA hybrids. The protein is Ribonuclease H of Pseudomonas fluorescens (strain ATCC BAA-477 / NRRL B-23932 / Pf-5).